Reading from the N-terminus, the 380-residue chain is Succinyl-diaminopimelate desuccinylase (380 aa).

His69 serves as a coordination point for Zn(2+). The active site involves Asp71. Residue Asp102 participates in Zn(2+) binding. Glu135 functions as the Proton acceptor in the catalytic mechanism. Positions 136, 164, and 353 each coordinate Zn(2+).

This sequence belongs to the peptidase M20A family. DapE subfamily. Homodimer. The cofactor is Zn(2+). Co(2+) is required as a cofactor.

It carries out the reaction N-succinyl-(2S,6S)-2,6-diaminopimelate + H2O = (2S,6S)-2,6-diaminopimelate + succinate. It functions in the pathway amino-acid biosynthesis; L-lysine biosynthesis via DAP pathway; LL-2,6-diaminopimelate from (S)-tetrahydrodipicolinate (succinylase route): step 3/3. Catalyzes the hydrolysis of N-succinyl-L,L-diaminopimelic acid (SDAP), forming succinate and LL-2,6-diaminopimelate (DAP), an intermediate involved in the bacterial biosynthesis of lysine and meso-diaminopimelic acid, an essential component of bacterial cell walls. This is Succinyl-diaminopimelate desuccinylase from Cereibacter sphaeroides (strain ATCC 17025 / ATH 2.4.3) (Rhodobacter sphaeroides).